The primary structure comprises 372 residues: N-methyl-L-tryptophan oxidase (372 aa).

Residue 4-34 participates in FAD binding; it reads DLIIIGSGSVGAAAGYYATRAGLNVLMTDAH. S-8alpha-FAD cysteine is present on cysteine 308.

Belongs to the MSOX/MTOX family. MTOX subfamily. In terms of assembly, monomer. It depends on FAD as a cofactor.

It carries out the reaction N(alpha)-methyl-L-tryptophan + O2 + H2O = L-tryptophan + formaldehyde + H2O2. Its function is as follows. Catalyzes the oxidative demethylation of N-methyl-L-tryptophan. In Escherichia coli O157:H7, this protein is N-methyl-L-tryptophan oxidase.